The chain runs to 319 residues: Pantothenate kinase (319 aa).

96–103 (GSVAVGKS) contributes to the ATP binding site.

It belongs to the prokaryotic pantothenate kinase family.

It is found in the cytoplasm. It carries out the reaction (R)-pantothenate + ATP = (R)-4'-phosphopantothenate + ADP + H(+). It participates in cofactor biosynthesis; coenzyme A biosynthesis; CoA from (R)-pantothenate: step 1/5. The polypeptide is Pantothenate kinase (Bacillus velezensis (strain DSM 23117 / BGSC 10A6 / LMG 26770 / FZB42) (Bacillus amyloliquefaciens subsp. plantarum)).